Here is a 146-residue protein sequence, read N- to C-terminus: uncharacterized protein (146 aa).

A helical membrane pass occupies residues 7–27 (FVLSITIVLVILIIIAYIWYN).

This sequence belongs to the asfivirus E146L family.

It is found in the host membrane. It localises to the virion. This is an uncharacterized protein from Ornithodoros (relapsing fever ticks).